A 379-amino-acid chain; its full sequence is Anhydro-N-acetylmuramic acid kinase (379 aa).

Residue 9–16 participates in ATP binding; that stretch reads GTSVDGID.

Belongs to the anhydro-N-acetylmuramic acid kinase family.

It carries out the reaction 1,6-anhydro-N-acetyl-beta-muramate + ATP + H2O = N-acetyl-D-muramate 6-phosphate + ADP + H(+). The protein operates within amino-sugar metabolism; 1,6-anhydro-N-acetylmuramate degradation. Its pathway is cell wall biogenesis; peptidoglycan recycling. Its function is as follows. Catalyzes the specific phosphorylation of 1,6-anhydro-N-acetylmuramic acid (anhMurNAc) with the simultaneous cleavage of the 1,6-anhydro ring, generating MurNAc-6-P. Is required for the utilization of anhMurNAc either imported from the medium or derived from its own cell wall murein, and thus plays a role in cell wall recycling. This chain is Anhydro-N-acetylmuramic acid kinase, found in Picosynechococcus sp. (strain ATCC 27264 / PCC 7002 / PR-6) (Agmenellum quadruplicatum).